The sequence spans 1632 residues: Guanine exchange factor for Rac 30 (1632 aa).

In terms of domain architecture, Calponin-homology (CH) spans Asn-16–Lys-122. Disordered regions lie at residues Gln-134 to Lys-155 and Phe-171 to Gly-285. Low complexity-rich tracts occupy residues Thr-137–Thr-154 and Gln-180–Thr-284. 2 consecutive IQ domains span residues Asp-388–Gln-417 and Ala-432–Arg-461. The DH domain maps to Arg-460–Lys-638. Low complexity predominate over residues Gln-775 to Asn-795. Positions Gln-775–Ser-798 are disordered. Positions Asp-940–Lys-1038 constitute a PH 1 domain. Residues Ser-1138–Ser-1156 are compositionally biased toward low complexity. A disordered region spans residues Ser-1138 to Gln-1161. The Arf-GAP domain occupies Asn-1271–Gly-1389. The segment at Cys-1286 to Cys-1309 adopts a C4-type zinc-finger fold. Low complexity-rich tracts occupy residues Asn-1380 to Thr-1402, Ser-1409 to Thr-1431, and Ser-1441 to Thr-1481. A disordered region spans residues Asn-1380–Thr-1521. Residues Asp-1500 to Ala-1515 are compositionally biased toward polar residues. The PH 2 domain occupies Lys-1532 to Thr-1631.

It localises to the membrane. The protein resides in the cytoplasmic vesicle. Its subcellular location is the phagosome membrane. Functionally, GTPase-activating protein for Rac involved in streaming and development. This is Guanine exchange factor for Rac 30 (gxcDD) from Dictyostelium discoideum (Social amoeba).